We begin with the raw amino-acid sequence, 721 residues long: Leucine-rich repeat flightless-interacting protein 2 (721 aa).

The DVL3-binding stretch occupies residues 1–370; sequence MGTPASGRKR…YMQGLKELKE (370 aa). A Phosphoserine modification is found at Ser-18. The stretch at 22–49 forms a coiled coil; the sequence is EALSNIAREAEARLAAKRAARAEARDIR. Phosphoserine is present on residues Gly-96, Leu-101, Tyr-168, Ser-173, Ser-190, and Ser-202. Disordered regions lie at residues 232 to 262 and 295 to 338; these read SARS…ESVV and KSDK…IDPD. Polar residues-rich tracts occupy residues 237-251 and 305-338; these read PGFT…VSSD and TRPS…IDPD. 5 positions are modified to phosphoserine: Ser-309, Ser-312, Ser-320, Ser-324, and Ser-328. Thr-331 carries the phosphothreonine modification. 2 positions are modified to phosphoserine: Ser-332 and Ser-333. 2 coiled-coil regions span residues 349 to 524 and 566 to 714; these read DLKD…GEKH and LDVR…KANR.

It belongs to the LRRFIP family. Interacts (via N-terminus) with DVL3. Interacts with FLII. Weakly interacts with MYD88 in resting cells. Following LPS-stimulation, the interaction with MYD88 is rapidly enhanced; the complex gradually dissociates to basal levels after 6 hours of stimulation. Interaction with MYD88 is regulated by LPS-induced phosphorylation at Ser-202. In the presence of LPS, competes with FLII for MYD88-binding. Ser-190 and Ser-202 are phosphorylated in response to LPS stimulation. Ser-202 phosphorylation regulates the LPS-induced interaction with MYD88. As to expression, widely expressed, with highest levels in heart and skeletal muscle.

Functionally, may function as activator of the canonical Wnt signaling pathway, in association with DVL3, upstream of CTNNB1/beta-catenin. Positively regulates Toll-like receptor (TLR) signaling in response to agonist probably by competing with the negative FLII regulator for MYD88-binding. This Homo sapiens (Human) protein is Leucine-rich repeat flightless-interacting protein 2 (LRRFIP2).